A 267-amino-acid polypeptide reads, in one-letter code: Indole-3-glycerol phosphate synthase (267 aa).

It belongs to the TrpC family.

The catalysed reaction is 1-(2-carboxyphenylamino)-1-deoxy-D-ribulose 5-phosphate + H(+) = (1S,2R)-1-C-(indol-3-yl)glycerol 3-phosphate + CO2 + H2O. The protein operates within amino-acid biosynthesis; L-tryptophan biosynthesis; L-tryptophan from chorismate: step 4/5. This chain is Indole-3-glycerol phosphate synthase, found in Dichelobacter nodosus (strain VCS1703A).